Here is a 171-residue protein sequence, read N- to C-terminus: Co-chaperone protein HscB (171 aa).

Residues 2 to 74 (DYFTLFGLPA…LMRAEYLLSL (73 aa)) form the J domain.

Belongs to the HscB family. In terms of assembly, interacts with HscA and stimulates its ATPase activity. Interacts with IscU.

In terms of biological role, co-chaperone involved in the maturation of iron-sulfur cluster-containing proteins. Seems to help targeting proteins to be folded toward HscA. The sequence is that of Co-chaperone protein HscB from Escherichia coli (strain SMS-3-5 / SECEC).